The chain runs to 278 residues: Shikimate dehydrogenase (NADP(+)) (278 aa).

Shikimate is bound by residues Ser-23–Ser-25 and Thr-70. Catalysis depends on Lys-74, which acts as the Proton acceptor. Glu-86 is a binding site for NADP(+). Shikimate-binding residues include Asn-95 and Asp-110. NADP(+) is bound by residues Gly-135–Ala-139, Asn-159–Lys-164, and Met-224. A shikimate-binding site is contributed by Tyr-226. Gly-248 contributes to the NADP(+) binding site.

This sequence belongs to the shikimate dehydrogenase family. In terms of assembly, homodimer.

The enzyme catalyses shikimate + NADP(+) = 3-dehydroshikimate + NADPH + H(+). It participates in metabolic intermediate biosynthesis; chorismate biosynthesis; chorismate from D-erythrose 4-phosphate and phosphoenolpyruvate: step 4/7. In terms of biological role, involved in the biosynthesis of the chorismate, which leads to the biosynthesis of aromatic amino acids. Catalyzes the reversible NADPH linked reduction of 3-dehydroshikimate (DHSA) to yield shikimate (SA). The sequence is that of Shikimate dehydrogenase (NADP(+)) from Alcanivorax borkumensis (strain ATCC 700651 / DSM 11573 / NCIMB 13689 / SK2).